A 410-amino-acid chain; its full sequence is Translation initiation factor 2 subunit gamma (410 aa).

Positions 6–203 (QSEVNIGMVG…AIQEFIPTPK (198 aa)) constitute a tr-type G domain. The segment at 15 to 22 (GHVDHGKT) is G1. Positions 18, 22, 43, and 45 each coordinate Mg(2+). Residue 18–23 (DHGKTS) coordinates GTP. A G2 region spans residues 43-47 (GISIR). Residues cysteine 58, cysteine 61, cysteine 73, and cysteine 76 each contribute to the Zn(2+) site. A G3 region spans residues 90 to 93 (DAPG). GTP-binding positions include 146 to 149 (NKID) and 181 to 183 (SAH). The segment at 146 to 149 (NKID) is G4. Residues 181–183 (SAH) form a G5 region.

This sequence belongs to the TRAFAC class translation factor GTPase superfamily. Classic translation factor GTPase family. EIF2G subfamily. As to quaternary structure, heterotrimer composed of an alpha, a beta and a gamma chain. Mg(2+) is required as a cofactor.

It carries out the reaction GTP + H2O = GDP + phosphate + H(+). EIF-2 functions in the early steps of protein synthesis by forming a ternary complex with GTP and initiator tRNA. The sequence is that of Translation initiation factor 2 subunit gamma from Methanococcus maripaludis (strain C6 / ATCC BAA-1332).